A 463-amino-acid polypeptide reads, in one-letter code: Nuclear hormone receptor family member nhr-3 (463 aa).

Residues 50–125 (STICSVCCDE…VGMEPDAIRP (76 aa)) constitute a DNA-binding region (nuclear receptor). 2 NR C4-type zinc fingers span residues 53–73 (CSVCCDEASGRHYGVVACFGC) and 89–113 (CRYSKKCRIDKAGRNVCRSCRFQKC). Residues 121–131 (DAIRPDRDKTG) show a composition bias toward basic and acidic residues. The tract at residues 121 to 143 (DAIRPDRDKTGRQKNPRRNTEGS) is disordered. Residues 199-462 (EIENIVIQLQ…VLEELLFLDR (264 aa)) form the NR LBD domain.

It belongs to the nuclear hormone receptor family.

It localises to the nucleus. In terms of biological role, orphan nuclear receptor. The protein is Nuclear hormone receptor family member nhr-3 (nhr-3) of Caenorhabditis elegans.